The following is a 640-amino-acid chain: Serine/threonine-protein kinase WNG1 (640 aa).

A signal peptide spans 1–70 (MPEQDLASGF…GVLCTVEAGA (70 aa)). Disordered regions lie at residues 100–222 (PEVT…AQPT) and 237–280 (SHPD…DASN). Residues 104–120 (HASSEGSPQFESSLSQQ) are compositionally biased toward polar residues. Residues 124 to 141 (RPADRGEAHNGEEPRKDA) are compositionally biased toward basic and acidic residues. Over residues 175–186 (QRQASSAAESLA) the composition is skewed to low complexity. Residues 248–279 (FSKKQEGRRERRLAVRGDDSFARGHNRDRDAS) show a composition bias toward basic and acidic residues. One can recognise a Protein kinase domain in the interval 291–593 (WAKIAALATG…LKQVMEDPYF (303 aa)). Lys-395 is a binding site for ATP. Residue Asp-486 is the Proton acceptor of the active site. Residues 609–640 (PFRGDFSIDDPDAGGKMYIPPSKEQDHEQENE) are disordered. The segment covering 631–640 (KEQDHEQENE) has biased composition (basic and acidic residues).

It belongs to the protein kinase superfamily. STE Ser/Thr protein kinase family. WNG subfamily. Mg(2+) is required as a cofactor.

The protein resides in the cytoplasmic granule. It is found in the secreted. Its subcellular location is the parasitophorous vacuole lumen. The enzyme catalyses L-seryl-[protein] + ATP = O-phospho-L-seryl-[protein] + ADP + H(+). It carries out the reaction L-threonyl-[protein] + ATP = O-phospho-L-threonyl-[protein] + ADP + H(+). In terms of biological role, serine/threonine-protein kinase which, at the tachyzoite stage, phosphorylates several parasitophorous vacuole (PV)-resident proteins such as GRA2, GRA6 and GRA7. By phosphorylating GRA2 and GRA6, regulates the formation of a functional intravacuolar network (IVN); IVN is composed of membranous tubules that bud from the PV membrane into the vacuolar lumen. Plays a role in the establishement of chronic infection in the host by controlling cyst formation in the host tissues. The protein is Serine/threonine-protein kinase WNG1 of Toxoplasma gondii.